A 301-amino-acid chain; its full sequence is Probable 2-dehydro-3-deoxy-D-pentonate aldolase YjhH (301 aa).

Catalysis depends on charge relay system residues Thr46 and Tyr109. Residue Tyr135 is the Proton donor of the active site. Residue Lys164 is the Schiff-base intermediate with substrate of the active site.

It belongs to the DapA family.

The protein localises to the cytoplasm. It catalyses the reaction 2-dehydro-3-deoxy-D-arabinonate = glycolaldehyde + pyruvate. Functionally, functions as a 2-dehydro-3-deoxy-D-pentonate aldolase. In Escherichia coli (strain K12), this protein is Probable 2-dehydro-3-deoxy-D-pentonate aldolase YjhH (yjhH).